The sequence spans 352 residues: Nicotinate-nucleotide--dimethylbenzimidazole phosphoribosyltransferase (352 aa).

Catalysis depends on E318, which acts as the Proton acceptor.

This sequence belongs to the CobT family.

The catalysed reaction is 5,6-dimethylbenzimidazole + nicotinate beta-D-ribonucleotide = alpha-ribazole 5'-phosphate + nicotinate + H(+). It participates in nucleoside biosynthesis; alpha-ribazole biosynthesis; alpha-ribazole from 5,6-dimethylbenzimidazole: step 1/2. Catalyzes the synthesis of alpha-ribazole-5'-phosphate from nicotinate mononucleotide (NAMN) and 5,6-dimethylbenzimidazole (DMB). The polypeptide is Nicotinate-nucleotide--dimethylbenzimidazole phosphoribosyltransferase (Dehalococcoides mccartyi (strain ATCC BAA-2100 / JCM 16839 / KCTC 5957 / BAV1)).